The primary structure comprises 265 residues: Mlc titration factor A (265 aa).

Residues histidine 111, histidine 148, histidine 152, and glutamate 211 each coordinate Zn(2+).

Belongs to the MtfA family. As to quaternary structure, interacts with Mlc. Zn(2+) is required as a cofactor.

Its subcellular location is the cytoplasm. Its function is as follows. Involved in the modulation of the activity of the glucose-phosphotransferase system (glucose-PTS). Interacts with the transcriptional repressor Mlc, preventing its interaction with DNA and leading to the modulation of expression of genes regulated by Mlc, including ptsG, which encodes the PTS system glucose-specific EIICB component. In terms of biological role, shows zinc-dependent metallopeptidase activity. This Escherichia coli (strain SMS-3-5 / SECEC) protein is Mlc titration factor A.